Consider the following 346-residue polypeptide: Methionine import ATP-binding protein MetN 1 (346 aa).

The ABC transporter domain occupies 2 to 241 (IELKNVSKVF…PQHVTTKKFV (240 aa)). 38–45 (GYSGAGKS) contributes to the ATP binding site.

It belongs to the ABC transporter superfamily. Methionine importer (TC 3.A.1.24) family. The complex is composed of two ATP-binding proteins (MetN), two transmembrane proteins (MetI) and a solute-binding protein (MetQ).

It is found in the cell membrane. The catalysed reaction is L-methionine(out) + ATP + H2O = L-methionine(in) + ADP + phosphate + H(+). It carries out the reaction D-methionine(out) + ATP + H2O = D-methionine(in) + ADP + phosphate + H(+). Its function is as follows. Part of the ABC transporter complex MetNIQ involved in methionine import. Responsible for energy coupling to the transport system. The sequence is that of Methionine import ATP-binding protein MetN 1 from Bacillus cereus (strain ATCC 10987 / NRS 248).